We begin with the raw amino-acid sequence, 233 residues long: Upstream activation factor subunit spp27 (233 aa).

Residues 1 to 53 form the DEK-C domain; the sequence is MEEYETDIKQILGTVDRQTVSAKQVRQLLEERRKVDLSAHKKDLNALILKCFD. Disordered stretches follow at residues 55 to 122 and 194 to 233; these read TAAP…KPMK and IPDD…ESTA. An SWIB/MDM2 domain is found at 116-193; it reads PLNKPMKLSP…NKYLTNLMTK (78 aa). Residues 194-208 show a composition bias toward basic and acidic residues; that stretch reads IPDDQLPKPQPKNEE.

In terms of assembly, component of the UAF (upstream activation factor) complex which consists of spp27/uaf30, rrn5, rrn10, and histones H3 and H4. Interacts with rrn10.

The protein resides in the cytoplasm. It is found in the nucleus. Its function is as follows. Component of the UAF (upstream activation factor) complex which interacts with the upstream element of the RNA polymerase I promoter and forms a stable preinitiation complex. UAF seems to stimulate basal transcription to a fully activated level. This chain is Upstream activation factor subunit spp27 (spp27), found in Schizosaccharomyces pombe (strain 972 / ATCC 24843) (Fission yeast).